A 217-amino-acid chain; its full sequence is U exon protein (217 aa).

Disordered regions lie at residues 79–113 (ISGE…GGRV) and 171–217 (KEAP…WQRR). The segment covering 188 to 197 (RGQRGRKRRC) has biased composition (basic residues). A compositionally biased stretch (polar residues) spans 202 to 217 (GGFQQPTGANQAWQRR).

This sequence belongs to the adenoviridae U exon protein family.

It is found in the host nucleus. It localises to the host nucleoplasm. The protein resides in the host nucleolus. Might play a role in viral replication since it is associated with viral replication centers. Seems to have an effect on DBP localization. The protein is U exon protein of Human adenovirus C serotype 5 (HAdV-5).